We begin with the raw amino-acid sequence, 377 residues long: Histone deacetylase 8 (377 aa).

Residues 14-324 (LVPVYIYSPE…WTYLTGVILG (311 aa)) are histone deacetylase. Phosphoserine is present on serine 39. Aspartate 101 serves as a coordination point for substrate. Residue histidine 143 is the Proton acceptor of the active site. Residue glycine 151 participates in substrate binding. A divalent metal cation-binding residues include aspartate 178, histidine 180, and aspartate 267. Tyrosine 306 contributes to the substrate binding site.

Belongs to the histone deacetylase family. HD type 1 subfamily. Interacts with PEPB2-MYH11, a fusion protein consisting of the 165 N-terminal residues of CBF-beta (PEPB2) with the tail region of MYH11 produced by the inversion Inv(16)(p13q22), a translocation associated with acute myeloid leukemia of M4EO subtype. The PEPB2-MYH1 fusion protein also interacts with RUNX1, a well known transcriptional regulator, suggesting that the interaction with HDAC8 may participate in the conversion of RUNX1 into a constitutive transcriptional repressor. Interacts with CBFA2T3. Interacts with phosphorylated SMG5/EST1B; this interaction protects SMG5 from ubiquitin-mediated degradation. Associates with alpha-SMA (smooth muscle alpha-actin). A divalent metal cation serves as cofactor. Phosphorylated by PKA on serine 39. Phosphorylation reduces deacetylase activity observed preferentially on histones H3 and H4. In terms of tissue distribution, weakly expressed in most tissues. Expressed at higher level in heart, brain, kidney and pancreas and also in liver, lung, placenta, prostate and kidney.

The protein resides in the nucleus. Its subcellular location is the chromosome. It localises to the cytoplasm. It carries out the reaction N(6)-acetyl-L-lysyl-[histone] + H2O = L-lysyl-[histone] + acetate. The enzyme catalyses N(6)-acetyl-L-lysyl-[protein] + H2O = L-lysyl-[protein] + acetate. The catalysed reaction is N(6)-(2E)-butenoyl-L-lysyl-[protein] + H2O = (2E)-2-butenoate + L-lysyl-[protein]. Its activity is inhibited by trichostatin A (TSA), suberoylanilide hydroxamic acid (SAHA), 3-(1-methyl-4-phenylacetyl-1H-2-pyrrolyl)-N-hydroxy-2-propenamide (APHA), 4-dimethylamino-N-(6-hydroxycarbamoyethyl)benzamide-N-hydroxy-7-(4-dimethylaminobenzoyl)aminoheptanamide (MS-344), 5-(4-methyl-benzoylamino)-biphenyl-3,4'-dicarboxylic acid 3-dimethylamide 4'-hydroxyamide (CRA-A) and butyrate. Histone deacetylase that catalyzes the deacetylation of lysine residues on the N-terminal part of the core histones (H2A, H2B, H3 and H4). Histone deacetylation gives a tag for epigenetic repression and plays an important role in transcriptional regulation, cell cycle progression and developmental events. Histone deacetylases act via the formation of large multiprotein complexes. Also involved in the deacetylation of cohesin complex protein SMC3 regulating release of cohesin complexes from chromatin. May play a role in smooth muscle cell contractility. In addition to protein deacetylase activity, also has protein-lysine deacylase activity: acts as a protein decrotonylase by mediating decrotonylation ((2E)-butenoyl) of histones. The sequence is that of Histone deacetylase 8 from Homo sapiens (Human).